The primary structure comprises 104 residues: DNA-directed RNA polymerase subunit Rpo13 (104 aa).

Disordered regions lie at residues 1-33 (MVSGMSTDEEKEGTSDEEVNEEKEVEETSEDEF) and 78-104 (RDSRRKAKKAVSKKVKKTKKKEKSVEG). Residues 7-31 (TDEEKEGTSDEEVNEEKEVEETSED) are compositionally biased toward acidic residues. A compositionally biased stretch (basic residues) spans 80–104 (SRRKAKKAVSKKVKKTKKKEKSVEG).

The protein belongs to the archaeal Rpo13 RNA polymerase subunit family. Part of the 13-subunit RNA polymerase complex.

It is found in the cytoplasm. It catalyses the reaction RNA(n) + a ribonucleoside 5'-triphosphate = RNA(n+1) + diphosphate. In terms of biological role, DNA-dependent RNA polymerase (RNAP) catalyzes the transcription of DNA into RNA using the four ribonucleoside triphosphates as substrates. Probably binds dsDNA. The protein is DNA-directed RNA polymerase subunit Rpo13 of Saccharolobus solfataricus (strain ATCC 35092 / DSM 1617 / JCM 11322 / P2) (Sulfolobus solfataricus).